A 352-amino-acid chain; its full sequence is S-adenosylmethionine:tRNA ribosyltransferase-isomerase (352 aa).

It belongs to the QueA family. In terms of assembly, monomer.

Its subcellular location is the cytoplasm. The enzyme catalyses 7-aminomethyl-7-carbaguanosine(34) in tRNA + S-adenosyl-L-methionine = epoxyqueuosine(34) in tRNA + adenine + L-methionine + 2 H(+). The protein operates within tRNA modification; tRNA-queuosine biosynthesis. Its function is as follows. Transfers and isomerizes the ribose moiety from AdoMet to the 7-aminomethyl group of 7-deazaguanine (preQ1-tRNA) to give epoxyqueuosine (oQ-tRNA). The chain is S-adenosylmethionine:tRNA ribosyltransferase-isomerase from Dechloromonas aromatica (strain RCB).